The following is a 955-amino-acid chain: Eukaryotic translation initiation factor 3 subunit A (955 aa).

A coiled-coil region spans residues 96 to 127 (LSLAEQRVTDAQAQADKIADEEEADDLEAEET). The 174-residue stretch at 325–498 (YQRVASFVLL…RSVLFEEVRA (174 aa)) folds into the PCI domain. 2 coiled-coil regions span residues 533–636 (AEAR…INAK) and 752–860 (KREA…KRAG). The span at 789 to 858 (RAEEEAKAAA…ELEAKLEAKR (70 aa)) shows a compositional bias: basic and acidic residues. The tract at residues 789 to 955 (RAEEEAKAAA…GRYIPPSQRN (167 aa)) is disordered.

It belongs to the eIF-3 subunit A family. Component of the eukaryotic translation initiation factor 3 (eIF-3) complex.

Its subcellular location is the cytoplasm. Functionally, RNA-binding component of the eukaryotic translation initiation factor 3 (eIF-3) complex, which is involved in protein synthesis of a specialized repertoire of mRNAs and, together with other initiation factors, stimulates binding of mRNA and methionyl-tRNAi to the 40S ribosome. The eIF-3 complex specifically targets and initiates translation of a subset of mRNAs involved in cell proliferation. In Yarrowia lipolytica (strain CLIB 122 / E 150) (Yeast), this protein is Eukaryotic translation initiation factor 3 subunit A.